The chain runs to 176 residues: Cytochrome b (176 aa).

Transmembrane regions (helical) follow at residues 33–53 (FGSL…FLAM), 77–98 (WLLR…YLHV), and 113–133 (WNVG…GYVL). Heme b is bound by residues His-83 and His-97.

This sequence belongs to the cytochrome b family. In terms of assembly, the cytochrome bc1 complex contains 11 subunits: 3 respiratory subunits (MT-CYB, CYC1 and UQCRFS1), 2 core proteins (UQCRC1 and UQCRC2) and 6 low-molecular weight proteins (UQCRH/QCR6, UQCRB/QCR7, UQCRQ/QCR8, UQCR10/QCR9, UQCR11/QCR10 and a cleavage product of UQCRFS1). This cytochrome bc1 complex then forms a dimer. It depends on heme b as a cofactor.

Its subcellular location is the mitochondrion inner membrane. Component of the ubiquinol-cytochrome c reductase complex (complex III or cytochrome b-c1 complex) that is part of the mitochondrial respiratory chain. The b-c1 complex mediates electron transfer from ubiquinol to cytochrome c. Contributes to the generation of a proton gradient across the mitochondrial membrane that is then used for ATP synthesis. The sequence is that of Cytochrome b (MT-CYB) from Mormopterus kalinowskii (Kalinowski's mastiff bat).